A 433-amino-acid polypeptide reads, in one-letter code: Probable dipeptidase (433 aa).

Residue Cys-20 is part of the active site.

Belongs to the peptidase C69 family.

It carries out the reaction an L-aminoacyl-L-amino acid + H2O = 2 an L-alpha-amino acid. In Salmonella dublin, this protein is Probable dipeptidase (pipD).